We begin with the raw amino-acid sequence, 729 residues long: Transient receptor potential cation channel subfamily V member 5 (729 aa).

At 1–327 (MGGFLPKAEG…SFKWNKYGRP (327 aa)) the chain is on the cytoplasmic side. 6 ANK repeats span residues 44 to 74 (ILES…DVRQ), 78 to 107 (LGET…ELVF), 116 to 145 (AGQT…SVSA), 162 to 191 (FGEH…DIRA), 195 to 228 (LGNT…HGDH), and 239 to 268 (QGLT…HIQW). Residues 328–348 (YFCILAALYLLYMICFTTCCV) traverse the membrane as a helical segment. At 349–385 (YRPLKFRGGNRTHSRDITILQQKLLQEAYETREDIIR) the chain is on the extracellular side. N-linked (GlcNAc...) asparagine glycosylation is present at asparagine 358. A helical transmembrane segment spans residues 386–408 (LVGELVSIVGAVIILLLEIPDIF). Residues 409–419 (RVGASRYFGKT) lie on the Cytoplasmic side of the membrane. A helical transmembrane segment spans residues 420-442 (ILGGPFHVIIITYASLVLVTMVM). Residues 443–448 (RLTNTN) are Extracellular-facing. A helical transmembrane segment spans residues 449–469 (GEVVPMSFALVLGWCSVMYFT). At 470 to 492 (RGFQMLGPFTIMIQKMIFGDLMR) the chain is on the cytoplasmic side. The helical transmembrane segment at 493–513 (FCWLMAVVILGFASAFYIIFQ) threads the bilayer. The segment at residues 524 to 544 (YDYPMALFTTFELFLTVIDAP) is an intramembrane region (pore-forming). Aspartate 542 contributes to the Ca(2+) binding site. The helical transmembrane segment at 557–577 (IVNFAFTIIATLLMLNLFIAM) threads the bilayer. Residues 578–729 (MGDTHWRVAQ…EGDGEEVYHF (152 aa)) lie on the Cytoplasmic side of the membrane. The interaction with S100A10 stretch occupies residues 598–602 (VATTV). The involved in Ca(2+)-dependent inactivation stretch occupies residues 650–653 (VFKN). The span at 654–665 (SDKEDDQEHPSE) shows a compositional bias: basic and acidic residues. The tract at residues 654 to 675 (SDKEDDQEHPSEKQPSGAESGT) is disordered. Phosphothreonine is present on threonine 685. Serine 689 bears the Phosphoserine mark. Residues 700–729 (GWEILRQNTLGHLNLGLNLSEGDGEEVYHF) form an involved in Ca(2+)-dependent inactivation region.

Belongs to the transient receptor (TC 1.A.4) family. TrpV subfamily. TRPV5 sub-subfamily. Homotetramer and probably heterotetramer with TRPV6. Interacts with TRPV6. Interacts with S100A10 and probably with the ANAX2-S100A10 heterotetramer. The interaction with S100A10 is required for the trafficking to the plasma membrane. Interacts with calmodulin. Interacts with BSPRY, which results in its inactivation. Glycosylated. In terms of tissue distribution, expressed at high levels in kidney, small intestine and pancreas, and at lower levels in testis, prostate, placenta, brain, colon and rectum.

It localises to the apical cell membrane. It carries out the reaction Ca(2+)(in) = Ca(2+)(out). Activated by WNK3. Constitutively active calcium selective cation channel thought to be involved in Ca(2+) reabsorption in kidney and intestine. Required for normal Ca(2+) reabsorption in the kidney distal convoluted tubules. The channel is activated by low internal calcium level and the current exhibits an inward rectification. A Ca(2+)-dependent feedback regulation includes fast channel inactivation and slow current decay. Heteromeric assembly with TRPV6 seems to modify channel properties. TRPV5-TRPV6 heteromultimeric concatemers exhibit voltage-dependent gating. The polypeptide is Transient receptor potential cation channel subfamily V member 5 (TRPV5) (Homo sapiens (Human)).